The following is an 809-amino-acid chain: Leucine--tRNA ligase (809 aa).

Residues 40 to 50 (PYPSGRIHMGH) carry the 'HIGH' region motif. The short motif at 579–583 (KMSKS) is the 'KMSKS' region element. Lys582 provides a ligand contact to ATP.

Belongs to the class-I aminoacyl-tRNA synthetase family.

The protein localises to the cytoplasm. The catalysed reaction is tRNA(Leu) + L-leucine + ATP = L-leucyl-tRNA(Leu) + AMP + diphosphate. This chain is Leucine--tRNA ligase, found in Campylobacter jejuni subsp. doylei (strain ATCC BAA-1458 / RM4099 / 269.97).